The following is a 177-amino-acid chain: MTFKGTTIVAVKRDGAVALAGDGQVGLGNGIIVKRDAVKLRRLYKDRVVAGFAGSVADAFALFERFEGKLEESQGNLRRAAVQLAKDWRTDKYLRRLEALLVVADREAVLLISGGGEVIEPDDGIIAVGSGGAFALAAARALARHTALPAVDIAREALQIASQICVHTNDRITVEQV.

Residue threonine 6 is part of the active site. Na(+)-binding residues include serine 162, cysteine 165, and threonine 168.

Belongs to the peptidase T1B family. HslV subfamily. In terms of assembly, a double ring-shaped homohexamer of HslV is capped on each side by a ring-shaped HslU homohexamer. The assembly of the HslU/HslV complex is dependent on binding of ATP.

It is found in the cytoplasm. It catalyses the reaction ATP-dependent cleavage of peptide bonds with broad specificity.. Its activity is regulated as follows. Allosterically activated by HslU binding. Functionally, protease subunit of a proteasome-like degradation complex believed to be a general protein degrading machinery. In Desulforudis audaxviator (strain MP104C), this protein is ATP-dependent protease subunit HslV.